The chain runs to 348 residues: MGKTLKEVAEYLGGRVIGDENAVVGGLGTLDDAGEGQITFLANPKYAQKVATTRATAVILPPGAPGHGRNVIEVSNPYLAFAKLLTLFYVAPPKALGVMDGAVIGQGVAMGKDISIYPGAHVADGVKMGDRVTLYPGVVLYPGVELGSDVTLHANVVVRERCRIGNRVTVHSGTVIGTDGFGYAPDGKDWYKIPQIGIVILEDDVEIGSNAVIDRAALEATIIGRGTKIDNLVQIAHNCVIGENCMIVSQVGISGSTKVGNHVTMGGQVGVAGHIQIGDNVMVGAKSGVPGNIPANQIVSGIPAFAHRDWLKASSVFPRLPEHRKTLASLEKRVQELEEKLKADEKVK.

Histidine 237 acts as the Proton acceptor in catalysis.

The protein belongs to the transferase hexapeptide repeat family. LpxD subfamily. Homotrimer.

The enzyme catalyses a UDP-3-O-[(3R)-3-hydroxyacyl]-alpha-D-glucosamine + a (3R)-hydroxyacyl-[ACP] = a UDP-2-N,3-O-bis[(3R)-3-hydroxyacyl]-alpha-D-glucosamine + holo-[ACP] + H(+). The protein operates within bacterial outer membrane biogenesis; LPS lipid A biosynthesis. In terms of biological role, catalyzes the N-acylation of UDP-3-O-acylglucosamine using 3-hydroxyacyl-ACP as the acyl donor. Is involved in the biosynthesis of lipid A, a phosphorylated glycolipid that anchors the lipopolysaccharide to the outer membrane of the cell. In Geotalea daltonii (strain DSM 22248 / JCM 15807 / FRC-32) (Geobacter daltonii), this protein is UDP-3-O-acylglucosamine N-acyltransferase.